The following is a 234-amino-acid chain: UPF0758 protein Smal_0281 (234 aa).

An MPN domain is found at 103–225; it reads VGNNPAAVGR…PVSFAERGLL (123 aa). Zn(2+) is bound by residues His174, His176, and Asp187. Positions 174–187 match the JAMM motif motif; sequence HNHPSGDPEPSSAD.

It belongs to the UPF0758 family.

This chain is UPF0758 protein Smal_0281, found in Stenotrophomonas maltophilia (strain R551-3).